The following is a 349-amino-acid chain: MNEKKHFTLQELALLTDCKLVGNPSQIIKSVADLENASEEDASFFANNRYLQSLKESQAGVVFVDLQTPLIEGKNYLLSENPSRSFQHLIDTLYPQKKHPSGFTGIHTSAVIHPTAEIGNKVTICPQAVIDEGVKIGSGSFIGAGVYIGSYSEIGEDCTIHPRVVIREKCYLGNRVILQPGVVIGSCGFGYTTNQQGQHIKLNQVGNVWVENDVEIGANTTIDRARFKSTRIGQGTKIDNLVQIAHGVTIGSYNIIVSQTGIAGSTTTGKYVVIAGQAAIAGHLHLKDHVVVAGKSGVTKSLNTGKYSGIPAMPIKDYNRNQVFLRKIEIYINQIKNLEKRVLELESQN.

His-246 serves as the catalytic Proton acceptor.

The protein belongs to the transferase hexapeptide repeat family. LpxD subfamily. Homotrimer.

It carries out the reaction a UDP-3-O-[(3R)-3-hydroxyacyl]-alpha-D-glucosamine + a (3R)-hydroxyacyl-[ACP] = a UDP-2-N,3-O-bis[(3R)-3-hydroxyacyl]-alpha-D-glucosamine + holo-[ACP] + H(+). It participates in bacterial outer membrane biogenesis; LPS lipid A biosynthesis. Catalyzes the N-acylation of UDP-3-O-acylglucosamine using 3-hydroxyacyl-ACP as the acyl donor. Is involved in the biosynthesis of lipid A, a phosphorylated glycolipid that anchors the lipopolysaccharide to the outer membrane of the cell. This is UDP-3-O-acylglucosamine N-acyltransferase from Protochlamydia amoebophila (strain UWE25).